Here is an 889-residue protein sequence, read N- to C-terminus: Coatomer subunit gamma-2 (889 aa).

5 HEAT repeats span residues 67–102, 103–140, 289–326, 328–360, and 361–398; these read VEATEVFFATTKLFQSKDAGLRRMVYLMIKELSPSA, DEVIIVTSSLMKDMNSKTDMYRANAIRVLCRIIDSTLL, RELTPAITVLQLFLSSSKPVLRFAAVRTLNKVASTHPL, VTNCNIDMESLISDQNRSIATLAITTLLKTGNE, and SSVDRLMKQMTNFMSDIADEFKIVVVEAIRSLCLKFPL. Positions 596-617 are disordered; it reads PLAEKKTTGKKPTGPASALSGP.

Belongs to the COPG family. As to quaternary structure, oligomeric complex that consists of at least the alpha, beta, beta', gamma, delta, epsilon and zeta subunits.

The protein localises to the cytoplasm. The protein resides in the golgi apparatus membrane. Its subcellular location is the cytoplasmic vesicle. It localises to the COPI-coated vesicle membrane. Functionally, the coatomer is a cytosolic protein complex that binds to dilysine motifs and reversibly associates with Golgi non-clathrin-coated vesicles, which further mediate biosynthetic protein transport from the ER, via the Golgi up to the trans Golgi network. Coatomer complex is required for budding from Golgi membranes, and is essential for the retrograde Golgi-to-ER transport of dilysine-tagged proteins. The polypeptide is Coatomer subunit gamma-2 (Oryza sativa subsp. japonica (Rice)).